A 304-amino-acid chain; its full sequence is Aspartate carbamoyltransferase catalytic subunit (304 aa).

Carbamoyl phosphate contacts are provided by Arg-56 and Thr-57. Lys-85 is a binding site for L-aspartate. Carbamoyl phosphate contacts are provided by Arg-106, His-134, and Gln-137. Residues Arg-167 and Arg-226 each coordinate L-aspartate. Leu-265 and Pro-266 together coordinate carbamoyl phosphate.

This sequence belongs to the aspartate/ornithine carbamoyltransferase superfamily. ATCase family. As to quaternary structure, heterooligomer of catalytic and regulatory chains.

It carries out the reaction carbamoyl phosphate + L-aspartate = N-carbamoyl-L-aspartate + phosphate + H(+). It participates in pyrimidine metabolism; UMP biosynthesis via de novo pathway; (S)-dihydroorotate from bicarbonate: step 2/3. Catalyzes the condensation of carbamoyl phosphate and aspartate to form carbamoyl aspartate and inorganic phosphate, the committed step in the de novo pyrimidine nucleotide biosynthesis pathway. The sequence is that of Aspartate carbamoyltransferase catalytic subunit from Picrophilus torridus (strain ATCC 700027 / DSM 9790 / JCM 10055 / NBRC 100828 / KAW 2/3).